The following is a 252-amino-acid chain: Triosephosphate isomerase (252 aa).

8–10 lines the substrate pocket; the sequence is NWK. The active-site Electrophile is His95. Catalysis depends on Glu167, which acts as the Proton acceptor. Residues Gly173, Ser212, and 233–234 contribute to the substrate site; that span reads GG.

The protein belongs to the triosephosphate isomerase family. Homodimer.

It localises to the cytoplasm. The catalysed reaction is D-glyceraldehyde 3-phosphate = dihydroxyacetone phosphate. The protein operates within carbohydrate biosynthesis; gluconeogenesis. It functions in the pathway carbohydrate degradation; glycolysis; D-glyceraldehyde 3-phosphate from glycerone phosphate: step 1/1. Functionally, involved in the gluconeogenesis. Catalyzes stereospecifically the conversion of dihydroxyacetone phosphate (DHAP) to D-glyceraldehyde-3-phosphate (G3P). This Lawsonia intracellularis (strain PHE/MN1-00) protein is Triosephosphate isomerase.